The chain runs to 362 residues: 3-isopropylmalate dehydrogenase (362 aa).

78-91 (GYKWDSLPPHQRPE) is an NAD(+) binding site. Substrate contacts are provided by Arg98, Arg108, Arg136, and Asp226. Mg(2+)-binding residues include Asp226, Asp250, and Asp254. 284–296 (GSAPDIAGQDKAN) serves as a coordination point for NAD(+).

Belongs to the isocitrate and isopropylmalate dehydrogenases family. LeuB type 1 subfamily. In terms of assembly, homodimer. It depends on Mg(2+) as a cofactor. Mn(2+) serves as cofactor.

It is found in the cytoplasm. The catalysed reaction is (2R,3S)-3-isopropylmalate + NAD(+) = 4-methyl-2-oxopentanoate + CO2 + NADH. It functions in the pathway amino-acid biosynthesis; L-leucine biosynthesis; L-leucine from 3-methyl-2-oxobutanoate: step 3/4. Functionally, catalyzes the oxidation of 3-carboxy-2-hydroxy-4-methylpentanoate (3-isopropylmalate) to 3-carboxy-4-methyl-2-oxopentanoate. The product decarboxylates to 4-methyl-2 oxopentanoate. This chain is 3-isopropylmalate dehydrogenase, found in Nostoc sp. (strain PCC 7120 / SAG 25.82 / UTEX 2576).